The primary structure comprises 510 residues: NAD(P)H-quinone oxidoreductase subunit 2 B, chloroplastic (510 aa).

The next 13 membrane-spanning stretches (helical) occupy residues 24 to 44 (LLLF…GLIL), 57 to 77 (IPWL…ALLF), 99 to 119 (IFQF…VEYI), 124 to 144 (MAIT…MFLC), 150 to 170 (ITIF…SGYT), 183 to 203 (YLLM…WLYG), 229 to 249 (ISIA…PAPF), 295 to 315 (WHLL…LIAI), 323 to 343 (MLAY…IVGD), 354 to 374 (YMLF…LFGL), 395 to 415 (ALSS…AGFF), 418 to 438 (LHLF…IGLL), and 484 to 504 (MIVC…IIAI).

This sequence belongs to the complex I subunit 2 family. NDH is composed of at least 16 different subunits, 5 of which are encoded in the nucleus.

It localises to the plastid. Its subcellular location is the chloroplast thylakoid membrane. The catalysed reaction is a plastoquinone + NADH + (n+1) H(+)(in) = a plastoquinol + NAD(+) + n H(+)(out). The enzyme catalyses a plastoquinone + NADPH + (n+1) H(+)(in) = a plastoquinol + NADP(+) + n H(+)(out). Its function is as follows. NDH shuttles electrons from NAD(P)H:plastoquinone, via FMN and iron-sulfur (Fe-S) centers, to quinones in the photosynthetic chain and possibly in a chloroplast respiratory chain. The immediate electron acceptor for the enzyme in this species is believed to be plastoquinone. Couples the redox reaction to proton translocation, and thus conserves the redox energy in a proton gradient. The sequence is that of NAD(P)H-quinone oxidoreductase subunit 2 B, chloroplastic from Drimys granadensis.